A 1863-amino-acid chain; its full sequence is Transient receptor potential cation channel subfamily M member 7 (1863 aa).

Met-1 carries the N-acetylmethionine modification. Residues 1–850 (MSQKSWIEST…ITRKFYAFYH (850 aa)) are Cytoplasmic-facing. Ser-101 carries the phosphoserine modification. Positions 544–555 (NRRSGRNTSSST) are enriched in low complexity. The interval 544-574 (NRRSGRNTSSSTPQLRKSHETFGNRADKKEK) is disordered. The segment covering 560-573 (KSHETFGNRADKKE) has biased composition (basic and acidic residues). Residues 851–876 (APIVKFWFNTLAYLGFLMLYTFVVLV) form a helical membrane-spanning segment. At 877–882 (KMEQLP) the chain is on the extracellular side. A helical transmembrane segment spans residues 883–904 (SVQEWIVIAYIFTYAIEKVREV). Over 905–923 (FMSEAGKISQKIKVWFSDY) the chain is Cytoplasmic. The chain crosses the membrane as a helical span at residues 924–943 (FNVSDTIAIISFFVGFGLRF). The Extracellular portion of the chain corresponds to 944 to 956 (GAKWNYINAYDNH). Residues 957–980 (VFVAGRLIYCLNIIFWYVRLLDFL) traverse the membrane as a helical segment. Residues 981-999 (AVNQQAGPYVMMIGKMVAN) lie on the Cytoplasmic side of the membrane. Residues 1000–1023 (MFYIVVIMALVLLSFGVPRKAILY) form a helical membrane-spanning segment. Residues 1024 to 1025 (PH) are Extracellular-facing. The pore-forming intramembrane region spans 1026 to 1066 (EEPSWSLAKDIVFHPYWMIFGEVYAYEIDVCANDSTLPTIC). Residues 1067–1069 (GPG) are Extracellular-facing. A helical membrane pass occupies residues 1070-1098 (TWLTPFLQAVYLFVQYIIMVNLLIAFFNN). Residues 1099–1863 (VYLQVKAISN…EATNSVRLML (765 aa)) are Cytoplasmic-facing. 3 S-palmitoyl cysteine lipidation sites follow: Cys-1143, Cys-1144, and Cys-1146. Position 1163 is a phosphothreonine (Thr-1163). Phosphoserine occurs at positions 1191, 1193, 1224, 1255, and 1258. Residues 1198 to 1250 (RVTFERVEQMSIQIKEVGDRVNYIKRSLQSLDSQIGHLQDLSALTVDTLKTLT) are a coiled coil. Phosphothreonine is present on Thr-1265. Phosphoserine occurs at positions 1300, 1357, 1360, 1385, 1386, 1389, 1394, 1395, and 1403. The interval 1380-1418 (NQKLGSSPNSSPHMSSPPTKFSVSTPSQPSCKSHLESTT) is disordered. Low complexity predominate over residues 1385–1397 (SSPNSSPHMSSPP). A compositionally biased stretch (polar residues) spans 1398 to 1410 (TKFSVSTPSQPSC). Phosphothreonine is present on Thr-1404. Phosphoserine occurs at positions 1406 and 1445. Thr-1454 carries the post-translational modification Phosphothreonine. At Ser-1455 the chain carries Phosphoserine. Phosphothreonine occurs at positions 1466 and 1470. A phosphoserine mark is found at Ser-1491, Ser-1498, Ser-1502, Ser-1511, Ser-1525, and Ser-1531. The segment at 1498-1539 (SRRASTEDSPEVDSKAALLPDWLRDRPSNREMPSEGGTLNGL) is disordered. Over residues 1519–1530 (WLRDRPSNREMP) the composition is skewed to basic and acidic residues. A Phosphothreonine modification is found at Thr-1535. A Phosphoserine modification is found at Ser-1541. Thr-1549 is subject to Phosphothreonine. A phosphoserine mark is found at Ser-1565 and Ser-1567. Phosphothreonine is present on Thr-1581. In terms of domain architecture, Alpha-type protein kinase spans 1592 to 1822 (ILNNSMSSWS…CCRKLKLPDL (231 aa)). Phosphoserine is present on residues Ser-1596 and Ser-1613. ADP contacts are provided by Gly-1619, Gly-1620, Leu-1621, Arg-1622, and Lys-1646. Phosphoserine is present on Ser-1658. Thr-1683 carries the post-translational modification Phosphothreonine. Residues Glu-1718, Glu-1719, and Met-1721 each contribute to the ADP site. Residue His-1751 participates in Zn(2+) binding. The active-site Proton acceptor is the Asp-1765. ADP is bound at residue Asp-1775. Ser-1777 carries the post-translational modification Phosphoserine. His-1808, Cys-1810, and Cys-1814 together coordinate Zn(2+). Thr-1828 bears the Phosphothreonine mark. The interval 1838–1863 (ESSDLNLQSGNSTKESEATNSVRLML) is disordered. Residues 1841–1863 (DLNLQSGNSTKESEATNSVRLML) show a composition bias toward polar residues. 3 positions are modified to phosphoserine: Ser-1846, Ser-1849, and Ser-1858.

It in the C-terminal section; belongs to the protein kinase superfamily. Alpha-type protein kinase family. ALPK subfamily. The protein in the N-terminal section; belongs to the transient receptor (TC 1.A.4) family. LTrpC subfamily. TRPM7 sub-subfamily. As to quaternary structure, homodimer. Homotetramer. Forms heteromers with TRPM6; heteromeric channels are functionally different from the homomeric channels. Interacts with PLCB1. Requires Zn(2+) as cofactor. Palmitoylated; palmitoylation at Cys-1143, Cys-1144 and Cys-1146 promotes TRPM7 trafficking from the Golgi to the surface membrane. In terms of processing, autophosphorylated; autophosphorylation regulates TRPM7 kinase activity towards its substrates. Post-translationally, the C-terminal kinase domain can be cleaved from the channel segment in a cell-type-specific fashion. TRPM7 is cleaved by caspase-8, dissociating the kinase from the ion-conducting pore. The cleaved kinase fragments (M7CKs) can translocate to the cell nucleus and binds chromatin-remodeling complex proteins in a Zn(2+)-dependent manner to ultimately phosphorylate specific Ser/Thr residues of histones. As to expression, found to be expressed in brain and skeletal muscle, with stronger signals in kidney, heart, liver and spleen.

It localises to the cell membrane. The protein localises to the cytoplasmic vesicle membrane. The protein resides in the nucleus. It catalyses the reaction L-seryl-[protein] + ATP = O-phospho-L-seryl-[protein] + ADP + H(+). It carries out the reaction L-threonyl-[protein] + ATP = O-phospho-L-threonyl-[protein] + ADP + H(+). The enzyme catalyses Mg(2+)(in) = Mg(2+)(out). The catalysed reaction is Ca(2+)(in) = Ca(2+)(out). It catalyses the reaction Zn(2+)(in) = Zn(2+)(out). With respect to regulation, channel displays constitutive activity. Channel activity is negatively regulated by cytosolic Mg(2+), Mg-ATP and low intracellular pH. Resting free cytosolic Mg(2+) and Mg-ATP concentrations seem to be sufficient to block native TRPM7 channel activity. TRPM7 channel activity is highly dependent on membrane levels of phosphatidylinositol 4,5 bisphosphate (PIP2). PIP2 hydrolysis negatively regulates TRPM7 channel activity. TRPM7 kinase activity does not affect channel activity. The kinase activity is controlled through the autophosphorylation of a serine/threonine-rich region located N-terminal to the catalytic domain. Bifunctional protein that combines an ion channel with an intrinsic kinase domain, enabling it to modulate cellular functions either by conducting ions through the pore or by phosphorylating downstream proteins via its kinase domain. The channel is highly permeable to divalent cations, specifically calcium (Ca2+), magnesium (Mg2+) and zinc (Zn2+) and mediates their influx. Controls a wide range of biological processes such as Ca2(+), Mg(2+) and Zn(2+) homeostasis, vesicular Zn(2+) release channel and intracellular Ca(2+) signaling, embryonic development, immune responses, cell motility, proliferation and differentiation. The C-terminal alpha-kinase domain autophosphorylates cytoplasmic residues of TRPM7. TRPM7 phosphorylates SMAD2, suggesting that TRPM7 kinase may play a role in activating SMAD signaling pathways. In vitro, TRPM7 kinase phosphorylates ANXA1 (annexin A1), myosin II isoforms and a variety of proteins with diverse cellular functions. In terms of biological role, the cleaved channel exhibits substantially higher current and potentiates Fas receptor signaling. Its function is as follows. The C-terminal kinase domain can be cleaved from the channel segment in a cell-type-specific fashion. In immune cells, the TRPM7 kinase domain is clipped from the channel domain by caspases in response to Fas-receptor stimulation. The cleaved kinase fragments can translocate to the nucleus, and bind chromatin-remodeling complex proteins in a Zn(2+)-dependent manner to ultimately phosphorylate specific Ser/Thr residues of histones known to be functionally important for cell differentiation and embryonic development. This is Transient receptor potential cation channel subfamily M member 7 (Trpm7) from Mus musculus (Mouse).